The following is a 531-amino-acid chain: Plant UBX domain-containing protein 11 (531 aa).

The residue at position 1 (Met1) is an N-acetylmethionine. Residues 160–173 (AVASPSTASSVQPS) are compositionally biased toward low complexity. Disordered stretches follow at residues 160-316 (AVAS…KASD) and 441-531 (ANAS…NDRR). Composition is skewed to polar residues over residues 174-190 (ETKS…NNDG) and 201-214 (EPSN…NQPA). Basic and acidic residues predominate over residues 290–301 (VDTKETMKPKDE). The 79-residue stretch at 312–390 (KKASDVHLNI…RLFDRQALVV (79 aa)) folds into the UBX domain. Composition is skewed to polar residues over residues 441-478 (ANAS…GRSN) and 486-496 (TSRIGSNIHTL).

As to quaternary structure, interacts with CDC48A.

The protein is Plant UBX domain-containing protein 11 of Arabidopsis thaliana (Mouse-ear cress).